The chain runs to 199 residues: Recombination protein RecR (199 aa).

The C4-type zinc finger occupies 57–72 (CQSCRTFTEQSLCPIC). The Toprim domain occupies 81-176 (GVICVVETPA…IISRIAHGVP (96 aa)).

Belongs to the RecR family.

Its function is as follows. May play a role in DNA repair. It seems to be involved in an RecBC-independent recombinational process of DNA repair. It may act with RecF and RecO. The sequence is that of Recombination protein RecR from Shewanella denitrificans (strain OS217 / ATCC BAA-1090 / DSM 15013).